A 460-amino-acid polypeptide reads, in one-letter code: Chromosomal replication initiator protein DnaA (460 aa).

The tract at residues Met1–Ile91 is domain I, interacts with DnaA modulators. A domain II region spans residues Ile91–Ser122. The tract at residues Pro123–Ser342 is domain III, AAA+ region. 4 residues coordinate ATP: Gly169, Gly171, Lys172, and Thr173. The tract at residues Leu343–Lys460 is domain IV, binds dsDNA.

The protein belongs to the DnaA family. As to quaternary structure, oligomerizes as a right-handed, spiral filament on DNA at oriC.

It localises to the cytoplasm. Functionally, plays an essential role in the initiation and regulation of chromosomal replication. ATP-DnaA binds to the origin of replication (oriC) to initiate formation of the DNA replication initiation complex once per cell cycle. Binds the DnaA box (a 9 base pair repeat at the origin) and separates the double-stranded (ds)DNA. Forms a right-handed helical filament on oriC DNA; dsDNA binds to the exterior of the filament while single-stranded (ss)DNA is stabiized in the filament's interior. The ATP-DnaA-oriC complex binds and stabilizes one strand of the AT-rich DNA unwinding element (DUE), permitting loading of DNA polymerase. After initiation quickly degrades to an ADP-DnaA complex that is not apt for DNA replication. Binds acidic phospholipids. This Wolbachia pipientis wMel protein is Chromosomal replication initiator protein DnaA.